Reading from the N-terminus, the 585-residue chain is Zinc finger protein 614 (585 aa).

The 72-residue stretch at 8–79 (LTLEDVAVEF…DAKIQNKNCP (72 aa)) folds into the KRAB domain. A C2H2-type 1; atypical zinc finger spans residues 205 to 227 (HACIECEQTFLRKSQLIYHENIC). The segment at 257–281 (KICIPNEYRKGSTVKSSLITHQQTH) adopts a C2H2-type 2; degenerate zinc-finger fold. 10 C2H2-type zinc fingers span residues 287-309 (YMCS…QRTH), 315-337 (YVCK…QRTH), 343-365 (YICS…QRTH), 371-393 (YMCS…QRSH), 399-421 (YICS…QRTH), 427-449 (YICN…QRTH), 455-477 (YECN…ERCH), 483-505 (FVCT…QRIH), 511-533 (YECN…QRTH), and 539-561 (YGCS…KKMH).

This sequence belongs to the krueppel C2H2-type zinc-finger protein family.

The protein localises to the nucleus. May be involved in transcriptional regulation. This chain is Zinc finger protein 614 (ZNF614), found in Homo sapiens (Human).